Reading from the N-terminus, the 831-residue chain is von Willebrand factor A domain-containing protein DDB_G0285981 (831 aa).

Positions R60–S188 constitute a VIT domain. The VWFA domain maps to E312 to V480.

This chain is von Willebrand factor A domain-containing protein DDB_G0285981, found in Dictyostelium discoideum (Social amoeba).